The chain runs to 573 residues: ESX-1 secretion system protein EccA1 (573 aa).

334-341 (GPPGTGKT) contacts ATP.

The protein belongs to the CbxX/CfxQ family. In terms of assembly, part of the ESX-1 / type VII secretion system (T7SS), which is composed of cytosolic and membrane components.

It is found in the cytoplasm. Its function is as follows. Part of the ESX-1 specialized secretion system, which delivers several virulence factors to host cells during infection, including the key virulence factors EsxA (ESAT-6) and EsxB (CFP-10). EccA1 exhibits ATPase activity and may provide energy for the export of ESX-1 substrates. This Mycobacterium tuberculosis (strain CDC 1551 / Oshkosh) protein is ESX-1 secretion system protein EccA1.